Here is a 255-residue protein sequence, read N- to C-terminus: Membrane protein insertase YidC 2 (255 aa).

The first 20 residues, 1 to 20 (MKKKLGLLAMVVALMAITAG), serve as a signal peptide directing secretion. Cys-21 carries N-palmitoyl cysteine lipidation. The S-diacylglycerol cysteine moiety is linked to residue Cys-21. The next 5 membrane-spanning stretches (helical) occupy residues 59 to 79 (YGLA…PLMI), 129 to 149 (LAGC…YHAI), 160 to 180 (FLWF…VAAI), 202 to 222 (MMLW…PAAL), and 223 to 243 (SLYW…IKGP).

The protein belongs to the OXA1/ALB3/YidC family. Type 2 subfamily.

It is found in the cell membrane. Its function is as follows. Required for the insertion and/or proper folding and/or complex formation of integral membrane proteins into the membrane. Involved in integration of membrane proteins that insert both dependently and independently of the Sec translocase complex, as well as at least some lipoproteins. The protein is Membrane protein insertase YidC 2 of Bacillus anthracis.